We begin with the raw amino-acid sequence, 250 residues long: Maleate isomerase (250 aa).

Residues Asn-15, 80–82 (CLV), Tyr-137, and Asn-167 contribute to the substrate site. Catalysis depends on Cys-80, which acts as the Nucleophile. An S-(2-succinyl)cysteine modification is found at Cys-80. The Proton donor role is filled by Cys-198. 199–200 (VQ) lines the substrate pocket.

The protein belongs to the maleate isomerase family. In terms of assembly, homodimer.

The catalysed reaction is maleate = fumarate. Its pathway is cofactor degradation; nicotinate degradation. Its function is as follows. Catalyzes cis-trans isomerization of the C2-C3 double bond in maleate to yield fumarate in the aerobic nicotinate degradation pathway. The protein is Maleate isomerase of Pseudomonas putida (strain ATCC 47054 / DSM 6125 / CFBP 8728 / NCIMB 11950 / KT2440).